A 93-amino-acid chain; its full sequence is Early nodulin-12A (93 aa).

Positions 1–24 (MASFLLSILVFFLSALVLVPQGFA) are cleaved as a signal peptide. The tract at residues 30–93 (PAYRPPQTEP…HPPSEDNIHF (64 aa)) is disordered. A run of 10 repeats spans residues 34 to 38 (PPQTE), 39 to 43 (PPVHK), 44 to 48 (PPHKE), 49 to 53 (PPVHK), 54 to 58 (PPHKD), 59 to 63 (PPVNK), 64 to 68 (PPQKE), 69 to 73 (PPVHK), 74 to 78 (PPRKE), and 79 to 83 (PPTHR). Positions 34 to 83 (PPQTEPPVHKPPHKEPPVHKPPHKDPPVNKPPQKEPPVHKPPRKEPPTHR) are 10 X 5 AA tandem repeats of P-P-[HQVRT]-[HKNT]-[DEKR]. Over residues 46–93 (HKEPPVHKPPHKDPPVNKPPQKEPPVHKPPRKEPPTHRHPPSEDNIHF) the composition is skewed to basic and acidic residues.

This sequence belongs to the plant proline-rich protein superfamily. ENOD12 family. In terms of tissue distribution, more abundant in the young nodules than the mature nodules.

Its subcellular location is the secreted. It localises to the cell wall. Functionally, involved in the infection process during the plant-rhizobium interaction. The sequence is that of Early nodulin-12A (ENOD12A) from Medicago sativa (Alfalfa).